A 348-amino-acid chain; its full sequence is Killer cell immunoglobulin-like receptor 2DL2 (348 aa).

Positions methionine 1 to proline 21 are cleaved as a signal peptide. The Extracellular segment spans residues histidine 22 to histidine 245. Ig-like C2-type domains lie at glutamate 42–serine 107 and glycine 142–serine 205. Cystine bridges form between cysteine 49/cysteine 100 and cysteine 149/cysteine 198. Residues asparagine 84, asparagine 178, and asparagine 211 are each glycosylated (N-linked (GlcNAc...) asparagine). The chain crosses the membrane as a helical span at residues isoleucine 246–leucine 264. At histidine 265–proline 348 the chain is on the cytoplasmic side.

Belongs to the immunoglobulin superfamily.

It is found in the cell membrane. Receptor on natural killer (NK) cells for HLA-Cw1, 3, 7, and 8 allotypes. Inhibits the activity of NK cells thus preventing cell lysis. The protein is Killer cell immunoglobulin-like receptor 2DL2 of Homo sapiens (Human).